The following is a 360-amino-acid chain: S-adenosylmethionine:tRNA ribosyltransferase-isomerase (360 aa).

It belongs to the QueA family. As to quaternary structure, monomer.

It localises to the cytoplasm. The enzyme catalyses 7-aminomethyl-7-carbaguanosine(34) in tRNA + S-adenosyl-L-methionine = epoxyqueuosine(34) in tRNA + adenine + L-methionine + 2 H(+). It functions in the pathway tRNA modification; tRNA-queuosine biosynthesis. Transfers and isomerizes the ribose moiety from AdoMet to the 7-aminomethyl group of 7-deazaguanine (preQ1-tRNA) to give epoxyqueuosine (oQ-tRNA). In Sinorhizobium medicae (strain WSM419) (Ensifer medicae), this protein is S-adenosylmethionine:tRNA ribosyltransferase-isomerase.